The primary structure comprises 599 residues: Beta-(1--&gt;2)glucan export ATP-binding/permease protein NdvA (599 aa).

The ABC transmembrane type-1 domain occupies 21–301 (TITMCVASVL…ISAFINQTVT (281 aa)). 5 consecutive transmembrane segments (helical) span residues 22 to 42 (ITMC…PVLF), 55 to 75 (IFSP…AAVF), 156 to 176 (MRMS…GQLV), 248 to 268 (MAST…VTKG), and 276 to 296 (IAFI…SAFI). Residues 335–569 (IVFDNVTYEF…GGRFSDLLRA (235 aa)) form the ABC transporter domain. Position 368-375 (368-375 (GPTGAGKT)) interacts with ATP.

This sequence belongs to the ABC transporter superfamily. Beta-(1--&gt;2)glucan exporter (TC 3.A.1.108.1) family. In terms of assembly, homodimer.

It is found in the cell inner membrane. It catalyses the reaction [(1-&gt;2)-beta-D-glucosyl](n)(in) + ATP + H2O = [(1-&gt;2)-beta-D-glucosyl](n)(out) + ADP + phosphate + H(+). In terms of biological role, involved in beta-(1--&gt;2)glucan export. Its export to the periplasmic space is required to exert its action as a virulence factor. Transmembrane domains (TMD) form a pore in the inner membrane and the ATP-binding domain (NBD) is responsible for energy generation. The protein is Beta-(1--&gt;2)glucan export ATP-binding/permease protein NdvA of Brucella abortus (strain 2308).